The sequence spans 692 residues: Elongation factor G 1 (692 aa).

One can recognise a tr-type G domain in the interval 8–283 (EKTRNIGIMA…SVVEYLPSPV (276 aa)). GTP is bound by residues 17–24 (AHIDAGKT), 81–85 (DTPGH), and 135–138 (NKMD).

The protein belongs to the TRAFAC class translation factor GTPase superfamily. Classic translation factor GTPase family. EF-G/EF-2 subfamily.

It is found in the cytoplasm. In terms of biological role, catalyzes the GTP-dependent ribosomal translocation step during translation elongation. During this step, the ribosome changes from the pre-translocational (PRE) to the post-translocational (POST) state as the newly formed A-site-bound peptidyl-tRNA and P-site-bound deacylated tRNA move to the P and E sites, respectively. Catalyzes the coordinated movement of the two tRNA molecules, the mRNA and conformational changes in the ribosome. The chain is Elongation factor G 1 from Geobacter metallireducens (strain ATCC 53774 / DSM 7210 / GS-15).